Here is a 253-residue protein sequence, read N- to C-terminus: tRNA uridine(34) hydroxylase (253 aa).

The region spanning 127–221 (HGRPLVLLDT…YFEDVGGEGY (95 aa)) is the Rhodanese domain. Cys181 functions as the Cysteine persulfide intermediate in the catalytic mechanism.

It belongs to the TrhO family.

It carries out the reaction uridine(34) in tRNA + AH2 + O2 = 5-hydroxyuridine(34) in tRNA + A + H2O. Functionally, catalyzes oxygen-dependent 5-hydroxyuridine (ho5U) modification at position 34 in tRNAs. The protein is tRNA uridine(34) hydroxylase of Xanthomonas campestris pv. campestris (strain 8004).